Here is a 751-residue protein sequence, read N- to C-terminus: Cellulose synthase-like protein G3 (751 aa).

2 helical membrane passes run 47 to 67 (IYAVFHTCGIIALMYHHVHSL) and 72 to 92 (TTLITSLLLLSDIVLAFMWAT). Catalysis depends on residues D161 and D466. Helical transmembrane passes span 543–563 (CWAFWSLPLIVYGFLPQLALL), 577–597 (FWLYIVLFLGAYGQDLLDFVL), 617–639 (FSSHLFGFIEFTLKTLNLSTHGF), 674–694 (TVAIVNLLAFVWGLYGLFAWG), 697–717 (LVLELMLASFAVVNCLPIYEA), and 731–751 (VCFVAGILTFVLIVSGYVFLK).

It belongs to the glycosyltransferase 2 family. Plant cellulose synthase-like G subfamily.

The protein resides in the golgi apparatus membrane. Functionally, thought to be a Golgi-localized beta-glycan synthase that polymerize the backbones of noncellulosic polysaccharides (hemicelluloses) of plant cell wall. The polypeptide is Cellulose synthase-like protein G3 (CSLG3) (Arabidopsis thaliana (Mouse-ear cress)).